The sequence spans 302 residues: N-acetylmuramic acid 6-phosphate etherase (302 aa).

Residues Ile-58–Lys-221 form the SIS domain. Glu-86 (proton donor) is an active-site residue. Glu-117 is an active-site residue.

It belongs to the GCKR-like family. MurNAc-6-P etherase subfamily. Homodimer.

It catalyses the reaction N-acetyl-D-muramate 6-phosphate + H2O = N-acetyl-D-glucosamine 6-phosphate + (R)-lactate. It participates in amino-sugar metabolism; N-acetylmuramate degradation. In terms of biological role, specifically catalyzes the cleavage of the D-lactyl ether substituent of MurNAc 6-phosphate, producing GlcNAc 6-phosphate and D-lactate. In Clostridium botulinum (strain Loch Maree / Type A3), this protein is N-acetylmuramic acid 6-phosphate etherase.